The following is a 124-amino-acid chain: Ribonuclease VapC32 (124 aa).

One can recognise a PINc domain in the interval 2–112 (ILVDTSVWIE…TRDKRLKAAC (111 aa)). The Mg(2+) site is built by Asp-5 and Asp-86.

This sequence belongs to the PINc/VapC protein family. It depends on Mg(2+) as a cofactor.

In terms of biological role, toxic component of a type II toxin-antitoxin (TA) system. An RNase. Its toxic effect is neutralized by coexpression with cognate antitoxin VapB32. The polypeptide is Ribonuclease VapC32 (Mycobacterium tuberculosis (strain CDC 1551 / Oshkosh)).